The primary structure comprises 334 residues: Fructose-1,6-bisphosphatase class 1 (334 aa).

Residues Glu-90, Asp-113, Leu-115, and Asp-116 each coordinate Mg(2+). Residues 116 to 119, Asn-209, Tyr-242, and Lys-272 each bind substrate; that span reads DGSS. Glu-278 is a Mg(2+) binding site.

This sequence belongs to the FBPase class 1 family. As to quaternary structure, homotetramer. It depends on Mg(2+) as a cofactor.

It localises to the cytoplasm. The enzyme catalyses beta-D-fructose 1,6-bisphosphate + H2O = beta-D-fructose 6-phosphate + phosphate. Its pathway is carbohydrate biosynthesis; gluconeogenesis. The chain is Fructose-1,6-bisphosphatase class 1 from Haemophilus ducreyi (strain 35000HP / ATCC 700724).